The chain runs to 201 residues: UPF0301 protein BP0319 (201 aa).

It belongs to the UPF0301 (AlgH) family.

This chain is UPF0301 protein BP0319, found in Bordetella pertussis (strain Tohama I / ATCC BAA-589 / NCTC 13251).